The sequence spans 695 residues: Probable glucan endo-1,3-beta-glucosidase btgC (695 aa).

Disordered stretches follow at residues 1-53 (MSGP…THHG), 117-140 (RRGT…GSDN), 175-258 (GPAG…RSQA), and 286-314 (ETSY…STGS). Topologically, residues 1–317 (MSGPHRTFSF…PKPSTGSRKR (317 aa)) are cytoplasmic. The span at 36 to 45 (PISNMSSSPG) shows a compositional bias: polar residues. Residues 188–198 (HLGTSNSSQRN) are compositionally biased toward polar residues. A compositionally biased stretch (acidic residues) spans 231–241 (NPEEIADDGDD). A helical; Signal-anchor for type II membrane protein membrane pass occupies residues 318–338 (GWIIGAILAVIIIGAIVGGAV). Over 339–695 (GGTIGHKDSG…IPDCGGKTAA (357 aa)) the chain is Extracellular. A disordered region spans residues 346 to 372 (DSGDSASGSSASTQSASGDTDTNGDLD). Positions 349–366 (DSASGSSASTQSASGDTD) are enriched in low complexity. N-linked (GlcNAc...) asparagine glycosylation is found at Asn415, Asn438, and Asn466. Catalysis depends on Glu498, which acts as the Proton donor. Residue Glu597 is the Nucleophile of the active site. An N-linked (GlcNAc...) asparagine glycan is attached at Asn642.

It belongs to the glycosyl hydrolase 17 family.

It is found in the cell membrane. The catalysed reaction is Hydrolysis of (1-&gt;3)-beta-D-glucosidic linkages in (1-&gt;3)-beta-D-glucans.. In terms of biological role, glucanases play a role in cell expansion during growth, in cell-cell fusion during mating, and in spore release during sporulation. This enzyme may be involved in beta-glucan degradation. Active on laminarin and lichenan. The protein is Probable glucan endo-1,3-beta-glucosidase btgC (btgC) of Aspergillus clavatus (strain ATCC 1007 / CBS 513.65 / DSM 816 / NCTC 3887 / NRRL 1 / QM 1276 / 107).